Consider the following 226-residue polypeptide: Ribosome maturation factor RimP (226 aa).

The disordered stretch occupies residues 190–226 (VFPDTTRPQPGGKTGQRKKAQPKKPARGGAPHDDTTD). The span at 204–215 (GQRKKAQPKKPA) shows a compositional bias: basic residues.

It belongs to the RimP family.

The protein localises to the cytoplasm. In terms of biological role, required for maturation of 30S ribosomal subunits. In Nitratidesulfovibrio vulgaris (strain DSM 19637 / Miyazaki F) (Desulfovibrio vulgaris), this protein is Ribosome maturation factor RimP.